Consider the following 266-residue polypeptide: 3-methyl-2-oxobutanoate hydroxymethyltransferase (266 aa).

Mg(2+) contacts are provided by Asp45 and Asp84. Residues 45 to 46, Asp84, and Lys112 contribute to the 3-methyl-2-oxobutanoate site; that span reads DS. Glu114 serves as a coordination point for Mg(2+). Glu181 acts as the Proton acceptor in catalysis.

Belongs to the PanB family. Homodecamer; pentamer of dimers. Mg(2+) is required as a cofactor.

The protein resides in the cytoplasm. It carries out the reaction 3-methyl-2-oxobutanoate + (6R)-5,10-methylene-5,6,7,8-tetrahydrofolate + H2O = 2-dehydropantoate + (6S)-5,6,7,8-tetrahydrofolate. Its pathway is cofactor biosynthesis; (R)-pantothenate biosynthesis; (R)-pantoate from 3-methyl-2-oxobutanoate: step 1/2. In terms of biological role, catalyzes the reversible reaction in which hydroxymethyl group from 5,10-methylenetetrahydrofolate is transferred onto alpha-ketoisovalerate to form ketopantoate. In Pseudomonas fluorescens (strain SBW25), this protein is 3-methyl-2-oxobutanoate hydroxymethyltransferase.